Here is a 90-residue protein sequence, read N- to C-terminus: Auxin-responsive protein SAUR22 (90 aa).

It belongs to the ARG7 family.

The protein localises to the cell membrane. Functions as a positive effector of cell expansion through modulation of auxin transport. The polypeptide is Auxin-responsive protein SAUR22 (Arabidopsis thaliana (Mouse-ear cress)).